The primary structure comprises 122 residues: Large ribosomal subunit protein uL14 (122 aa).

Belongs to the universal ribosomal protein uL14 family. Part of the 50S ribosomal subunit. Forms a cluster with proteins L3 and L19. In the 70S ribosome, L14 and L19 interact and together make contacts with the 16S rRNA in bridges B5 and B8.

Its function is as follows. Binds to 23S rRNA. Forms part of two intersubunit bridges in the 70S ribosome. The chain is Large ribosomal subunit protein uL14 from Rickettsia africae (strain ESF-5).